Consider the following 908-residue polypeptide: Mechanosensitive ion channel protein 8 (908 aa).

A compositionally biased stretch (polar residues) spans 1–25; that stretch reads MDFRNSFKSHSSYKQIRSPGDQSEP. Disordered regions lie at residues 1–88, 148–172, 190–221, and 242–265; these read MDFR…HTAV, DQEN…SFDA, VAGS…LQEE, and VKTR…WRSG. Basic and acidic residues predominate over residues 31-70; sequence PILHDHHPDHSGMVVDDQKPDSTRSSLDDGRNAPVERDAS. Composition is skewed to polar residues over residues 75–85 and 156–171; these read QDNTTGTSTDH and HQTM…TSFD. Residues 196 to 206 are compositionally biased toward low complexity; that stretch reads SSSSHSSSSSS. The segment covering 207 to 218 has biased composition (polar residues); it reads ATMRTNQDQPQL. Residues 247 to 256 show a composition bias toward basic and acidic residues; the sequence is RLQDPPREEE. 6 helical membrane passes run 298–318, 341–361, 381–401, 411–431, 673–693, and 709–729; these read AITL…ACSL, LVLI…VFFI, AVQN…LFDK, FLPY…LWLI, MINI…LEIA, and AFIF…LFIV.

It belongs to the MscS (TC 1.A.23) family. As to expression, expressed in tricellular and mature pollen, and in germinating tube. Not detected in leaves or roots.

It localises to the cell membrane. The protein localises to the endomembrane system. Its activity is regulated as follows. Not regulated by MgCl(2), ruthenium red or tetramethylammonium-Cl. In terms of biological role, mechanosensitive channel that opens in response to stretch forces in the membrane lipid bilayer. Exhibits a 6.3-fold preference for chloride over sodium. Regulates osmotic forces during pollen hydration and germination. The chain is Mechanosensitive ion channel protein 8 from Arabidopsis thaliana (Mouse-ear cress).